The sequence spans 167 residues: Beta-3 adrenergic receptor (167 aa).

Residues 1-25 (RVGADAEAQECHSNPRCCSFASNMP) lie on the Extracellular side of the membrane. Cys-11 and Cys-17 are oxidised to a cystine. Residues 26–47 (YALLSSSVSFYLPLLVMLFVYA) traverse the membrane as a helical segment. Over 48 to 114 (RVFVVAKRQR…LPLREHRALR (67 aa)) the chain is Cytoplasmic. Residues 66 to 97 (RFPPEESPRSPSRSPSPVAGGTGEAPDGVPSC) form a disordered region. The helical transmembrane segment at 115 to 136 (TLGLIMGIFSLCWLPFFLANVL) threads the bilayer. Topologically, residues 137–148 (RALAGPSIVPNG) are extracellular. A helical membrane pass occupies residues 149-167 (VFIALNWLGYANSAFNPLI).

Belongs to the G-protein coupled receptor 1 family. Adrenergic receptor subfamily. ADRB3 sub-subfamily. In terms of assembly, interacts with ARRDC3.

The protein localises to the cell membrane. Functionally, beta-adrenergic receptors mediate the catecholamine-induced activation of adenylate cyclase through the action of G proteins. Beta-3 is involved in the regulation of lipolysis and thermogenesis. This Meriones unguiculatus (Mongolian jird) protein is Beta-3 adrenergic receptor (ADRB3).